Here is a 103-residue protein sequence, read N- to C-terminus: Pyrimidine/purine nucleoside phosphorylase (103 aa).

Belongs to the nucleoside phosphorylase PpnP family.

The catalysed reaction is a purine D-ribonucleoside + phosphate = a purine nucleobase + alpha-D-ribose 1-phosphate. The enzyme catalyses adenosine + phosphate = alpha-D-ribose 1-phosphate + adenine. It catalyses the reaction cytidine + phosphate = cytosine + alpha-D-ribose 1-phosphate. It carries out the reaction guanosine + phosphate = alpha-D-ribose 1-phosphate + guanine. The catalysed reaction is inosine + phosphate = alpha-D-ribose 1-phosphate + hypoxanthine. The enzyme catalyses thymidine + phosphate = 2-deoxy-alpha-D-ribose 1-phosphate + thymine. It catalyses the reaction uridine + phosphate = alpha-D-ribose 1-phosphate + uracil. It carries out the reaction xanthosine + phosphate = alpha-D-ribose 1-phosphate + xanthine. Catalyzes the phosphorolysis of diverse nucleosides, yielding D-ribose 1-phosphate and the respective free bases. Can use uridine, adenosine, guanosine, cytidine, thymidine, inosine and xanthosine as substrates. Also catalyzes the reverse reactions. This Nocardia farcinica (strain IFM 10152) protein is Pyrimidine/purine nucleoside phosphorylase.